A 298-amino-acid chain; its full sequence is Iron-regulated virulence regulatory protein IrgB (298 aa).

In terms of domain architecture, HTH lysR-type spans 1–59; it reads MQDLSAVKAFHALCQHKSLTAAAKALEQPKSTLSRRLAQLEEDLGQSLLMRQGNRLTLT. The segment at residues 19 to 38 is a DNA-binding region (H-T-H motif); that stretch reads LTAAAKALEQPKSTLSRRLA.

It belongs to the LysR transcriptional regulatory family.

In terms of biological role, transcription activation of the irgA gene. In the presence of sufficient iron, transcription of both irgA and irgB is negatively regulated by a fur-like protein. In low iron conditions, negative regulation of transcription is removed, and production of irgB leads to positive transcriptional activation of irgA. The chain is Iron-regulated virulence regulatory protein IrgB (irgB) from Vibrio cholerae serotype O1 (strain ATCC 39315 / El Tor Inaba N16961).